A 571-amino-acid polypeptide reads, in one-letter code: Decapping 5-like protein (571 aa).

A compositionally biased stretch (low complexity) spans 1 to 17 (MASESSQSSSPSSSQPP). Disordered regions lie at residues 1–27 (MASE…SPGN), 102–141 (LQVN…ISGY), 159–187 (LSSK…GSLT), and 258–305 (SQVV…SEAQ). Residues 25 to 108 (PGNNVGDTFI…IKDLQVNPSP (84 aa)) enclose the Sm domain. Polar residues-rich tracts occupy residues 104 to 138 (VNPS…SSPI) and 167 to 187 (TQHS…GSLT). The span at 264–279 (SPDVSSNQSYSSNPSP) shows a compositional bias: low complexity. Residues 293–305 (SVSSNLSPPSEAQ) show a composition bias toward polar residues. Residues 419-455 (RIPSSSIEYTEEFDFEAMNEKFKKSELWGYLGRNNQR) form the DFDF domain. The FFD box signature appears at 474 to 489 (PAYNKDDFFDTISCNQ). Residues 498–518 (QQHNQFPEHMRQVPEAFGNNF) carry the TFG box motif.

It belongs to the LSM14 family. In terms of assembly, homodimer. Component of the decapping complex.

It localises to the cytoplasm. The protein resides in the P-body. In terms of biological role, as a component of the decapping complex, involved in the degradation of mRNAs. Promotes P-body formation. Translational repressor. The polypeptide is Decapping 5-like protein (DCP5-L) (Arabidopsis thaliana (Mouse-ear cress)).